Consider the following 160-residue polypeptide: Cytochrome b6-f complex subunit 4 (160 aa).

The next 3 helical transmembrane spans lie at 36 to 56 (LLYI…GLAV), 95 to 115 (LLGV…PFLE), and 131 to 151 (TVFL…TLPI).

This sequence belongs to the cytochrome b family. PetD subfamily. As to quaternary structure, the 4 large subunits of the cytochrome b6-f complex are cytochrome b6, subunit IV (17 kDa polypeptide, petD), cytochrome f and the Rieske protein, while the 4 small subunits are petG, petL, petM and petN. The complex functions as a dimer.

It localises to the plastid. The protein resides in the chloroplast thylakoid membrane. Functionally, component of the cytochrome b6-f complex, which mediates electron transfer between photosystem II (PSII) and photosystem I (PSI), cyclic electron flow around PSI, and state transitions. The polypeptide is Cytochrome b6-f complex subunit 4 (Daucus carota (Wild carrot)).